Reading from the N-terminus, the 158-residue chain is NAD(P)H-quinone oxidoreductase subunit N (158 aa).

It belongs to the complex I NdhN subunit family. As to quaternary structure, NDH-1 can be composed of about 15 different subunits; different subcomplexes with different compositions have been identified which probably have different functions.

The protein resides in the cellular thylakoid membrane. It carries out the reaction a plastoquinone + NADH + (n+1) H(+)(in) = a plastoquinol + NAD(+) + n H(+)(out). It catalyses the reaction a plastoquinone + NADPH + (n+1) H(+)(in) = a plastoquinol + NADP(+) + n H(+)(out). Its function is as follows. NDH-1 shuttles electrons from an unknown electron donor, via FMN and iron-sulfur (Fe-S) centers, to quinones in the respiratory and/or the photosynthetic chain. The immediate electron acceptor for the enzyme in this species is believed to be plastoquinone. Couples the redox reaction to proton translocation, and thus conserves the redox energy in a proton gradient. Cyanobacterial NDH-1 also plays a role in inorganic carbon-concentration. This is NAD(P)H-quinone oxidoreductase subunit N from Synechococcus elongatus (strain ATCC 33912 / PCC 7942 / FACHB-805) (Anacystis nidulans R2).